The primary structure comprises 929 residues: MMRHCRREWLLALCLISVQLLIPTGCEGVLVAASNMSPPALTPLLINQVDQLVEHAWVKCGLDKRTLEDVRRHFNYNHVLAILRRMSGQDIKDTSPDIDGGTSVLSLERRDAILNCLSKQNFMSIAGQDGLKILSADYIKALIASLRTDLAQESSTTKSIPEQAGKPVPGKTSTPKPVNKPTDSVSSPPDRSYKSAPTEKENPPTKSVAEKKKDSSGMPNAFIGLSIAGIALMAHLCLCCFMCHGTSSSDLRDDKPLLTLNPSNLSAASKSSQGNPIDVNKLGVVSLKSEAGQNGDVKLISKEGTNNVNVVHPVSSVSESTLMPPPEGANNVNMVHPEGANNMNVVHPEGANNVNMVHPEGANNVNVNMVHPVGSLSESTPMQPPVMPPPIPKLLSPPAPQAPMPPLKASPVPPPEPSPPPAPKAAPPPPPPKSTGPGPPRPPPPAMPGSSKTRPPPPLKPGAKVGAVENSNEAKTKLKPFFWDKVTANPARSMVWDHLKSGSFQFNEQLMENLFGYNSTDKSSDTKKDLSSKDATQLIRILDPKKAQNLAISLRALGVSPQEVCSAVKEGSELPSDLIQTLIRWSPSNDEELRLRLYSGELFQLGPAEQFLRVIIDIPYIFQRLDALLFMANLPEEASNVKQSFATLEVACQELRNSRLFMKLLEAVLKTGNRMNVGTFRGGAQAFRLDTLLKLSDVKGTDGKTTLLHFVVQEIIRSEGVRAERAAKEQNSGVSSVKTDDLGDKSEQTEDGYKQLGLKVISSLGDELQDVRKAAILDADQLTMSVASLGHKLMKTNEFLNMDMKSLDEDSGFHRKLTHFVQQSQTDITFLLEEEKKMRLLVKDTVDYFHGSAGKDEGLRLFVIVRDFLAMLDKVCKEVKEASKVAPVKAKAKQPSQSLQSFRDPRVNLFPAIQHLRADSSSSSSDDES.

An N-terminal signal peptide occupies residues 1 to 28 (MMRHCRREWLLALCLISVQLLIPTGCEG). The tract at residues 153–215 (ESSTTKSIPE…KSVAEKKKDS (63 aa)) is disordered. Positions 171–189 (KTSTPKPVNKPTDSVSSPP) are enriched in polar residues. The segment covering 191–215 (RSYKSAPTEKENPPTKSVAEKKKDS) has biased composition (basic and acidic residues). The helical transmembrane segment at 222–242 (FIGLSIAGIALMAHLCLCCFM) threads the bilayer. Disordered stretches follow at residues 372 to 472 (PVGS…ENSN) and 726 to 749 (AAKE…SEQT). Residues 382–447 (MQPPVMPPPI…GPPRPPPPAM (66 aa)) show a composition bias toward pro residues. One can recognise an FH2 domain in the interval 468 to 898 (VENSNEAKTK…KAKAKQPSQS (431 aa)). Residues 738 to 749 (KTDDLGDKSEQT) are compositionally biased toward basic and acidic residues.

The protein belongs to the formin-like family. Class-I subfamily.

The protein localises to the membrane. This chain is Formin-like protein 11 (FH11), found in Oryza sativa subsp. japonica (Rice).